Reading from the N-terminus, the 907-residue chain is Catenin alpha-1 (907 aa).

Positions 870 to 879 are enriched in basic and acidic residues; sequence VKREKLDDGQ. The segment at 870–895 is disordered; that stretch reads VKREKLDDGQTNKVKRSSQKKHINPV. Basic residues predominate over residues 882-892; it reads KVKRSSQKKHI.

The protein belongs to the vinculin/alpha-catenin family. As to quaternary structure, interacts with ctnnb1, jupa and cdh2. Interacts with cdh1 during early stages of oogenesis, interaction is no longer present when oocyte develops into the unfertilized egg. Expressed in the skin (at protein level). Expressed in the ovary.

It localises to the cell junction. It is found in the adherens junction. Its subcellular location is the cytoplasm. The protein localises to the cytoskeleton. The protein resides in the cell membrane. It localises to the nucleus. Associates with the cytoplasmic domain of a variety of cadherins, forming catenin and cadherin complexes which are further linked to the actin filament network and is thereby involved in cell-cell adhesion. Required for embryonic development, via maintenance of adherens junctions that facilitate the maintenance of the epithelial barrier. In Danio rerio (Zebrafish), this protein is Catenin alpha-1.